The following is a 625-amino-acid chain: DNA-directed RNA polymerase subunit gamma (625 aa).

Residues cysteine 71, cysteine 73, cysteine 86, and cysteine 89 each contribute to the Zn(2+) site. Mg(2+)-binding residues include aspartate 467, aspartate 469, and aspartate 471.

Belongs to the RNA polymerase beta' chain family. RpoC1 subfamily. In cyanobacteria the RNAP catalytic core is composed of 2 alpha, 1 beta, 1 beta', 1 gamma and 1 omega subunit. When a sigma factor is associated with the core the holoenzyme is formed, which can initiate transcription. Mg(2+) serves as cofactor. Zn(2+) is required as a cofactor.

It carries out the reaction RNA(n) + a ribonucleoside 5'-triphosphate = RNA(n+1) + diphosphate. Functionally, DNA-dependent RNA polymerase catalyzes the transcription of DNA into RNA using the four ribonucleoside triphosphates as substrates. In Nostoc punctiforme (strain ATCC 29133 / PCC 73102), this protein is DNA-directed RNA polymerase subunit gamma.